We begin with the raw amino-acid sequence, 918 residues long: Hexokinase-1 (918 aa).

Residue M1 is modified to N-acetylmethionine. The tract at residues 1 to 10 (MIAAQLLAYY) is mitochondrial-binding peptide (MBP). Hexokinase domains are found at residues 16–458 (DDQV…MVTA) and 464–906 (AEQH…LITA). Residues R30 and 84 to 89 (DLGGSS) each bind ATP. The hexokinase small subdomain 1 stretch occupies residues 73-207 (DGSEKGDFIA…DYDANIVAVV (135 aa)). 84-88 (DLGGS) contacts D-glucose 6-phosphate. Residues S155, 172–173 (TK), and 208–209 (ND) each bind D-glucose. Residues 208–447 (NDTVGTMMTC…SDVRFLLSES (240 aa)) form a hexokinase large subdomain 1 region. Residues D209 and T232 each coordinate D-glucose 6-phosphate. Residues N235, E260, and 291 to 294 (QLFE) each bind D-glucose. Phosphoserine is present on S337. 413–415 (DGS) contributes to the D-glucose 6-phosphate binding site. 425 to 426 (RR) is an ATP binding site. D-glucose 6-phosphate-binding positions include T449, 532 to 536 (DLGGT), and S603. The interval 521–655 (DGTEHGDFLA…EFDLDVVAVV (135 aa)) is hexokinase small subdomain 2. 532–537 (DLGGTN) is an ATP binding site. Residues 620 to 621 (TK) and 656 to 657 (ND) contribute to the D-glucose site. Residues 656–895 (NDTVGTMMTC…CTVSFLLSED (240 aa)) form a hexokinase large subdomain 2 region. Positions 657 and 680 each coordinate D-glucose 6-phosphate. T680 is an ATP binding site. 3 residues coordinate D-glucose: N683, E708, and E742. ATP is bound by residues 747–748 (GM), 784–788 (TKFLS), and 863–867 (TLYKL). D-glucose 6-phosphate contacts are provided by residues 861–863 (DGT) and S897.

This sequence belongs to the hexokinase family. In terms of assembly, monomer. Interacts with RABL2/RABL2A; binds preferentially to GTP-bound RABL2. Interacts with VDAC1. The HK1-VDAC1 complex interacts with ATF2. Interacts (via N-terminal spermatogenic cell-specific region) with PFKM (via C-terminus). Interacts with SMAD5. Expressed in flagella of epididymal sperm.

It is found in the mitochondrion outer membrane. It localises to the cytoplasm. The protein localises to the cytosol. It catalyses the reaction a D-hexose + ATP = a D-hexose 6-phosphate + ADP + H(+). It carries out the reaction D-fructose + ATP = D-fructose 6-phosphate + ADP + H(+). The catalysed reaction is D-glucose + ATP = D-glucose 6-phosphate + ADP + H(+). The enzyme catalyses D-mannose + ATP = D-mannose 6-phosphate + ADP + H(+). It catalyses the reaction D-glucosamine + ATP = D-glucosamine 6-phosphate + ADP + H(+). Its pathway is carbohydrate metabolism; hexose metabolism. It participates in carbohydrate degradation; glycolysis; D-glyceraldehyde 3-phosphate and glycerone phosphate from D-glucose: step 1/4. Its activity is regulated as follows. Hexokinase is an allosteric enzyme inhibited by its product D-glucose 6-phosphate. Hexokinase activity is inhibited by N-acetyl-D-glucosamine. Functionally, catalyzes the phosphorylation of various hexoses, such as D-glucose, D-glucosamine, D-fructose, D-mannose and 2-deoxy-D-glucose, to hexose 6-phosphate (D-glucose 6-phosphate, D-glucosamine 6-phosphate, D-fructose 6-phosphate, D-mannose 6-phosphate and 2-deoxy-D-glucose 6-phosphate, respectively). Mediates the initial step of glycolysis by catalyzing phosphorylation of D-glucose to D-glucose 6-phosphate. Involved in innate immunity and inflammation by acting as a pattern recognition receptor for bacterial peptidoglycan. When released in the cytosol, N-acetyl-D-glucosamine component of bacterial peptidoglycan inhibits the hexokinase activity of HK1 and causes its dissociation from mitochondrial outer membrane, thereby activating the NLRP3 inflammasome. The chain is Hexokinase-1 from Rattus norvegicus (Rat).